Reading from the N-terminus, the 179-residue chain is Putative undecaprenyl-phosphate N-acetylgalactosaminyl 1-phosphate transferase (179 aa).

A helical membrane pass occupies residues 39 to 59 (IWFALIGLAIALPMIAVFSIL).

This sequence belongs to the bacterial sugar transferase family.

Its subcellular location is the cell membrane. It catalyses the reaction di-trans,octa-cis-undecaprenyl phosphate + UDP-N-acetyl-alpha-D-galactosamine = N-acetyl-alpha-D-galactosaminyl-di-trans,octa-cis-undecaprenyl diphosphate + UMP. It participates in cell wall biogenesis; teichuronic acid biosynthesis. In terms of biological role, might mediate the very first reaction in teichuronic synthesis, i.e. the formation of lipid-linked N-acetylglucosamine. The chain is Putative undecaprenyl-phosphate N-acetylgalactosaminyl 1-phosphate transferase (tuaA) from Bacillus subtilis (strain 168).